The chain runs to 174 residues: MVSFKSSSLFLHSLSALLVLTTLSSAAVNAGFVEMEIDTDEHTQPPKNAAYACVIKSTSCKSTSHFTSDVTYSPALNVTTCHHNGPLRNMWNRVVPWSDGHGMFVNTFYVADVQSDVSRTKADCDVSKLGKKTADDIRDIMDDNINTQTSCNAYIQCYDIKDVDNKCLPVSKDD.

An N-terminal signal peptide occupies residues 1–26 (MVSFKSSSLFLHSLSALLVLTTLSSA). Asn77 carries an N-linked (GlcNAc...) asparagine glycan.

In terms of assembly, secreted cysteine-rich proteins (SCRPs) are predicted to form amyloids.

It localises to the secreted. In terms of biological role, secreted cysteine-rich protein that might form amyloid strutures which are involved in attachment to hydrophobic surfaces and in formation of hydrophobic aerial hyphae. This is Secreted cysteine-rich protein UMAG_00792 from Mycosarcoma maydis (Corn smut fungus).